Here is a 374-residue protein sequence, read N- to C-terminus: MEMO1 family protein aq_1336 (374 aa).

The protein belongs to the MEMO1 family.

This chain is MEMO1 family protein aq_1336, found in Aquifex aeolicus (strain VF5).